The sequence spans 296 residues: Ribosomal RNA small subunit methyltransferase A (296 aa).

Residues 1-11 show a composition bias toward basic and acidic residues; the sequence is MERSHVGRDCG. Residues 1-24 form a disordered region; that stretch reads MERSHVGRDCGSRSSPRAFSVPTS. The span at 12–24 shows a compositional bias: polar residues; it reads SRSSPRAFSVPTS. S-adenosyl-L-methionine is bound by residues Asn-43, Leu-45, Gly-70, Glu-91, Asp-113, and Asn-135.

The protein belongs to the class I-like SAM-binding methyltransferase superfamily. rRNA adenine N(6)-methyltransferase family. RsmA subfamily.

It is found in the cytoplasm. It carries out the reaction adenosine(1518)/adenosine(1519) in 16S rRNA + 4 S-adenosyl-L-methionine = N(6)-dimethyladenosine(1518)/N(6)-dimethyladenosine(1519) in 16S rRNA + 4 S-adenosyl-L-homocysteine + 4 H(+). Its function is as follows. Specifically dimethylates two adjacent adenosines (A1518 and A1519) in the loop of a conserved hairpin near the 3'-end of 16S rRNA in the 30S particle. May play a critical role in biogenesis of 30S subunits. In Salinibacter ruber (strain DSM 13855 / M31), this protein is Ribosomal RNA small subunit methyltransferase A.